Consider the following 195-residue polypeptide: MAFVLSLLMALVLVSYGPGGSLGCYLSQRLMLDARENLKLLDRMNRLSPHSCLQDRKDFGLPQEMVEGDQLQKDQAFPVLYEMLQQSFNLFYTEHSSAAWDTTLLEQLCTGLQQQLDHLDTCRGQVMGEEDSELGNMDPIVTVKKYFQGIYDYLQEKGYSDCAWEIVRVEMMRALTVSTTLQKRLTKMGGDLNSP.

The signal sequence occupies residues Met1–Gly23. Cystine bridges form between Cys24–Cys122 and Cys52–Cys162.

It belongs to the alpha/beta interferon family. IFN-alphaII subfamily. Constitutively and exclusively expressed in the mononuclear cells of the extraembryonic trophectoderm.

The protein localises to the secreted. Paracrine hormone primarily responsible for maternal recognition of pregnancy. Interacts with endometrial receptors, probably type I interferon receptors, and blocks estrogen receptor expression, preventing the estrogen-induced increase in oxytocin receptor expression in the endometrium. This results in the suppression of the pulsatile endometrial release of the luteolytic hormone prostaglandin F2-alpha, hindering the regression of the corpus luteum (luteolysis) and therefore a return to ovarian cyclicity. This, and a possible direct effect of IFN-tau on prostaglandin synthesis, leads in turn to continued ovarian progesterone secretion, which stimulates the secretion by the endometrium of the nutrients required for the growth of the conceptus. In summary, displays particularly high antiviral and antiproliferative potency concurrently with particular weak cytotoxicity, high antiluteolytic activity and immunomodulatory properties. In contrast with other IFNs, IFN-tau is not virally inducible. This is Interferon tau-2 (IFNT2) from Ovis aries (Sheep).